Consider the following 349-residue polypeptide: Isopentenyl-diphosphate delta-isomerase (349 aa).

6 to 7 is a substrate binding site; sequence RK. FMN is bound by residues 62-64, S93, and N122; that span reads AMT. Substrate is bound at residue Q152. E153 serves as a coordination point for Mg(2+). Residues K184, T214, 258–259, and 280–281 contribute to the FMN site; these read GG and AG.

The protein belongs to the IPP isomerase type 2 family. In terms of assembly, homooctamer. Dimer of tetramers. FMN is required as a cofactor. NADPH serves as cofactor. Requires Mg(2+) as cofactor.

It localises to the cytoplasm. The enzyme catalyses isopentenyl diphosphate = dimethylallyl diphosphate. Involved in the biosynthesis of isoprenoids. Catalyzes the 1,3-allylic rearrangement of the homoallylic substrate isopentenyl (IPP) to its allylic isomer, dimethylallyl diphosphate (DMAPP). This chain is Isopentenyl-diphosphate delta-isomerase, found in Bacillus cereus (strain ZK / E33L).